We begin with the raw amino-acid sequence, 86 residues long: Progonadoliberin-2 (86 aa).

Residues 1–24 (MVHICRLLVLMGMLLCLSAQFASS) form the signal peptide. Pyrrolidone carboxylic acid is present on Gln-25. Gly-34 bears the Glycine amide mark.

This sequence belongs to the GnRH family.

It is found in the secreted. In terms of biological role, stimulates the secretion of gonadotropins. The polypeptide is Progonadoliberin-2 (gnrh2) (Rutilus rutilus (Roach)).